The chain runs to 669 residues: NSTMRRKVEQEGYLQESSKAGLPSATTGFQKSSHLMAFAHNPPAGPLPGAGQAPLGSDYPYYHIAEPQNVPGQIPYPVALHVNIVNVPQPAAAAIQRHYNDEDPEKEKRIKELELLLMSTENELKGQQALPTQNHTANYPGWHSTTVADNTMTSGDNAPVSCLGEHHHCTPSPPVDHGTSEMMSYYMDTTIGSTGPYPLARPGVMQGASSCCEDPWMPCRLQSACCPPRSCCPPWDEAAIQEVPTGLEHYSTDMECADVPLLTPSSKEMMSQALKATFSGFAKEQQRLGIPKDPQQWTETHVRDWVMWAVNEFSLKGVDFQKFCMNGAALCALGKECFLELAPDFVGDILWEHLEILQKEEAKPYPANGVNAAYPESRYTSDYFISYGIEHAQCVPPSEFSEPSFITESYQTLHPISSEELLSLKYENDYPSVILRDPVQTDSLQTDYFTIKQEVVTPDNMCMGRVSRGKLGGQDSFESIESYDSCDRLTQSWSSQSSFQSLQRVPSYDSFDSEDYPAALPNHKPKGTFKDYVRDRADMNKDKPVIPAAALAGYTGSGPIQLWQFLLELLTDKSCQSFISWTGDGWEFKLSDPDEVARRWGKRKNKPKMDYEKLSRGLRYYYDKNVIHKTAGKRYVYRFVCDLQSLLGYTPEEHSSASGLTSSMACSSF.

Positions Asn1–Gln10 are enriched in basic and acidic residues. Disordered regions lie at residues Asn1–Thr27 and Thr132–Thr153. The transcriptional activation domain stretch occupies residues Pro90–Trp142. The 86-residue stretch at Ala276–Glu361 folds into the PNT domain. A DNA-binding region (ETS) is located at residues Gly556 to Val640.

The protein localises to the host nucleus. Functionally, DNA-binding protein that specifically recognizes the sequence 5'-YAAC[GT]G-3'. The Myb-Ets protein induces predominantly erythroblastosis in chicken and transforms avian erythroblasts and immature myelomonocytic cells in culture. It appears that the Ets domain is responsible for the effects on erythroid cells and that the Myb domain encodes the myeloid-transforming capacity. This Avian leukemia virus E26 protein is p135Gag-Myb-Ets-transforming protein (GAG).